Reading from the N-terminus, the 568-residue chain is TWiK family of potassium channels protein 9 (568 aa).

At 1-15 (MKCSFHIPEKYQWAS) the chain is on the cytoplasmic side. The chain crosses the membrane as a helical span at residues 16 to 36 (TLFVHVALIAGVAVYTVFGAL). Residues 163–183 (IGNSVIFAFTVITTIGYGHVA) constitute an intramembrane region (pore-forming). A helical transmembrane segment spans residues 191–211 (LFLIFYGVIGVPFTLLTIADL). Residues 212–316 (GMFLTRFLKN…NNEPRKTEES (105 aa)) are Cytoplasmic-facing. Disordered regions lie at residues 243–262 (QRNKSQKTSPVMPDSERSEV) and 274–314 (MRTA…RKTE). The segment covering 297 to 307 (GKEEDEEEPEN) has biased composition (acidic residues). The chain crosses the membrane as a helical span at residues 317 to 337 (IALGITFTCYLVAGAKILSVY). An intramembrane region (pore-forming) is located at residues 343-363 (FFKALYFNFVTLTTIGLGDFV). Residues 370–390 (LLITLIYIGIGLALTTMAIEI) traverse the membrane as a helical segment. At 391–568 (AADLLKKLHY…LRTYTNARRK (178 aa)) the chain is on the cytoplasmic side.

The protein belongs to the two pore domain potassium channel (TC 1.A.1.8) family. Expressed in ray A-type neurons and cell bodies. Also seen in head, pharyngeal and phasmid neurons, and in coelomocytes.

The protein resides in the membrane. Functionally, potassium channel protein that may be component of regulatory network that controls ray development and function. The polypeptide is TWiK family of potassium channels protein 9 (twk-9) (Caenorhabditis elegans).